Consider the following 359-residue polypeptide: sn-1 linoleoyl-lipid 6-desaturase (359 aa).

A run of 2 helical transmembrane segments spans residues 45 to 65 (LIIV…PVIF) and 69 to 89 (LLGC…VGHD). The short motif at 88-92 (HDANH) is the Histidine box-1 element. The Histidine box-2 motif lies at 123–128 (HNYLHH). The next 3 membrane-spanning stretches (helical) occupy residues 165 to 185 (IWGL…YLVL), 206 to 226 (LLGI…ALGF), and 231 to 251 (VLIG…TIFM). The Histidine box-3 signature appears at 306 to 310 (HHLFP).

The protein belongs to the fatty acid desaturase type 2 family. The cofactor is Fe(2+).

Its subcellular location is the membrane. It catalyses the reaction a 1-[(9Z,12Z)-octadecdienoyl]-2-acyl-glycerolipid + 2 reduced [2Fe-2S]-[ferredoxin] + O2 + 2 H(+) = a 1-[(6Z,9Z,12Z)-octadectrienoyl]-2-acyl-glycerolipid + 2 oxidized [2Fe-2S]-[ferredoxin] + 2 H2O. It functions in the pathway lipid metabolism; polyunsaturated fatty acid biosynthesis. Desaturase involved in fatty acid biosynthesis. Introduces a double bond at carbon 6 of linoleoyl group (18:2) attached to the sn-1 position of the glycerol moiety of membrane glycerolipids, leading to the formation of gamma-linolenic acid (GLA). The protein is sn-1 linoleoyl-lipid 6-desaturase of Synechocystis sp. (strain ATCC 27184 / PCC 6803 / Kazusa).